Consider the following 732-residue polypeptide: Probable zinc transporter cis4 (732 aa).

The next 12 helical transmembrane spans lie at glutamate 52–valine 72, phenylalanine 79–tyrosine 99, valine 111–leucine 131, tyrosine 163–phenylalanine 183, valine 189–valine 209, leucine 219–leucine 239, glycine 240–isoleucine 260, isoleucine 268–isoleucine 288, isoleucine 350–tryptophan 370, alanine 380–alanine 400, isoleucine 415–valine 435, and leucine 453–histidine 473. The interval histidine 526–asparagine 547 is disordered. The next 2 membrane-spanning stretches (helical) occupy residues isoleucine 586–leucine 606 and phenylalanine 615–isoleucine 635.

It belongs to the cation diffusion facilitator (CDF) transporter (TC 2.A.4) family. SLC30A subfamily. In terms of assembly, interacts with zrg17.

It localises to the endoplasmic reticulum membrane. The protein localises to the golgi apparatus. Its subcellular location is the cis-Golgi network membrane. Functionally, probable zinc transporter involved in Golgi membrane trafficking through the regulation of zinc homeostasis. The chain is Probable zinc transporter cis4 (cis4) from Schizosaccharomyces pombe (strain 972 / ATCC 24843) (Fission yeast).